A 95-amino-acid polypeptide reads, in one-letter code: Aspartyl/glutamyl-tRNA(Asn/Gln) amidotransferase subunit C (95 aa).

This sequence belongs to the GatC family. As to quaternary structure, heterotrimer of A, B and C subunits.

It catalyses the reaction L-glutamyl-tRNA(Gln) + L-glutamine + ATP + H2O = L-glutaminyl-tRNA(Gln) + L-glutamate + ADP + phosphate + H(+). It carries out the reaction L-aspartyl-tRNA(Asn) + L-glutamine + ATP + H2O = L-asparaginyl-tRNA(Asn) + L-glutamate + ADP + phosphate + 2 H(+). In terms of biological role, allows the formation of correctly charged Asn-tRNA(Asn) or Gln-tRNA(Gln) through the transamidation of misacylated Asp-tRNA(Asn) or Glu-tRNA(Gln) in organisms which lack either or both of asparaginyl-tRNA or glutaminyl-tRNA synthetases. The reaction takes place in the presence of glutamine and ATP through an activated phospho-Asp-tRNA(Asn) or phospho-Glu-tRNA(Gln). The chain is Aspartyl/glutamyl-tRNA(Asn/Gln) amidotransferase subunit C from Thioalkalivibrio sulfidiphilus (strain HL-EbGR7).